Reading from the N-terminus, the 283-residue chain is Secretory carrier-associated membrane protein 2 (283 aa).

The tract at residues 1–47 is disordered; it reads MARHDPNPFADEEINPFANHTSVPPASNSYLKPLPPEPYDRGATVDI. Over 1–123 the chain is Cytoplasmic; the sequence is MARHDPNPFA…LQKIQYVAFT (123 aa). The span at 18 to 30 shows a compositional bias: polar residues; sequence ANHTSVPPASNSY. Positions 50 to 87 form a coiled coil; sequence DSGNDLRAKEMELQAKENELKRKEQELKRREDAIARTG. 4 helical membrane-spanning segments follow: residues 124-144, 151-171, 186-206, and 234-254; these read TLLG…VAWI, IWLL…VLWY, FGAF…AAVA, and IMYF…IWVI. Topologically, residues 255–283 are cytoplasmic; the sequence is QQVYAYFRGSGKAAEMKREATKSTLMRAL.

The protein belongs to the SCAMP family.

It is found in the cell membrane. The protein localises to the cytoplasmic vesicle. Its subcellular location is the secretory vesicle membrane. Probably involved in membrane trafficking. This chain is Secretory carrier-associated membrane protein 2 (SCAMP2), found in Arabidopsis thaliana (Mouse-ear cress).